The primary structure comprises 644 residues: Threonine--tRNA ligase (644 aa).

A TGS domain is found at Met-1–Tyr-61. The segment at Asp-241 to Pro-532 is catalytic. Zn(2+) contacts are provided by Cys-333, His-384, and His-509.

Belongs to the class-II aminoacyl-tRNA synthetase family. In terms of assembly, homodimer. Zn(2+) serves as cofactor.

The protein localises to the cytoplasm. It carries out the reaction tRNA(Thr) + L-threonine + ATP = L-threonyl-tRNA(Thr) + AMP + diphosphate + H(+). In terms of biological role, catalyzes the attachment of threonine to tRNA(Thr) in a two-step reaction: L-threonine is first activated by ATP to form Thr-AMP and then transferred to the acceptor end of tRNA(Thr). Also edits incorrectly charged L-seryl-tRNA(Thr). In Nitratidesulfovibrio vulgaris (strain ATCC 29579 / DSM 644 / CCUG 34227 / NCIMB 8303 / VKM B-1760 / Hildenborough) (Desulfovibrio vulgaris), this protein is Threonine--tRNA ligase.